The primary structure comprises 260 residues: MSRREDGRLDDELRPVRITRGFTSHPAGSVLVEFGETRVMCTASVTEGVPRWRKGTGQGWLTAEYAMLPAATHDRSDRESVKGRVGGRTQEISRLIGRSLRACIDLNALGENTIAIDCDVLQADGGTRTAAITGAYVALADAVTYLAAAEKLSDPRPLSCAIAAVSVGVVDGRVRVDLPYSEDSRAEVDMNVVATDTGTLVEIQGTGEGATFPRSTLDKLLDLALASCDQLFVVQREALDAPYPGALPEPTSPPKKAFGS.

Phosphate contacts are provided by residues Arg88 and 126 to 128 (GTR).

Belongs to the RNase PH family. In terms of assembly, homohexameric ring arranged as a trimer of dimers.

The catalysed reaction is tRNA(n+1) + phosphate = tRNA(n) + a ribonucleoside 5'-diphosphate. In terms of biological role, phosphorolytic 3'-5' exoribonuclease that plays an important role in tRNA 3'-end maturation. Removes nucleotide residues following the 3'-CCA terminus of tRNAs; can also add nucleotides to the ends of RNA molecules by using nucleoside diphosphates as substrates, but this may not be physiologically important. Probably plays a role in initiation of 16S rRNA degradation (leading to ribosome degradation) during starvation. The sequence is that of Ribonuclease PH from Mycobacterium sp. (strain JLS).